Reading from the N-terminus, the 503-residue chain is 26S proteasome non-ATPase regulatory subunit 5 (503 aa).

An N-acetylalanine modification is found at Ala2.

Belongs to the proteasome subunit S5B/HSM3 family. In terms of assembly, interacts with PSMC1, PSMC2, PSMD1 and PSMD6. Part of transient complex containing PSMD5, PSMC2, PSMC1 and PSMD2 formed during the assembly of the 26S proteasome.

Its function is as follows. Acts as a chaperone during the assembly of the 26S proteasome, specifically of the base subcomplex of the PA700/19S regulatory complex (RC). In the initial step of the base subcomplex assembly is part of an intermediate PSMD5:PSMC2:PSMC1:PSMD2 module which probably assembles with a PSMD10:PSMC4:PSMC5:PAAF1 module followed by dissociation of PSMD5. This is 26S proteasome non-ATPase regulatory subunit 5 (PSMD5) from Bos taurus (Bovine).